Consider the following 830-residue polypeptide: Septin and tuftelin-interacting protein 1 homolog (830 aa).

Residues 1–17 show a composition bias toward acidic residues; the sequence is MEDDDGRESFEINDMDL. Disordered regions lie at residues 1–122 and 196–244; these read MEDD…PKQN and AYGK…KGSW. The 47-residue stretch at 153–199 folds into the G-patch domain; sequence NSNKIMKMMQAMGYKPGEGLGAQGQGIVEPVQAQLRKGRGAVGAYGK.

It belongs to the TFP11/STIP family. Identified in the spliceosome C complex. Can assemble into large rod-like polymers. In terms of tissue distribution, detected in muscle cells from body, pharynx and vulva, in neurons from head and tail, in pharyngeal gland and in tail hypodermal cells.

The protein localises to the nucleus. Its function is as follows. May be involved in pre-mRNA splicing. Required for embryonic development and survival. The chain is Septin and tuftelin-interacting protein 1 homolog (stip-1) from Caenorhabditis elegans.